The following is a 491-amino-acid chain: Ketol-acid reductoisomerase (NADP(+)) (491 aa).

One can recognise a KARI N-terminal Rossmann domain in the interval 15–208; it reads AQLGKCRFMG…GGHRAGVLES (194 aa). Residues 45-48, Arg68, Arg76, Ser78, and 108-110 contribute to the NADP(+) site; these read CGAQ and DKQ. His132 is a catalytic residue. Gly158 lines the NADP(+) pocket. KARI C-terminal knotted domains are found at residues 209 to 344 and 345 to 484; these read SFVA…TAPQ and YEGK…MTDM. Asp217, Glu221, Glu389, and Glu393 together coordinate Mg(2+). Substrate is bound at residue Ser414.

The protein belongs to the ketol-acid reductoisomerase family. Requires Mg(2+) as cofactor.

The enzyme catalyses (2R)-2,3-dihydroxy-3-methylbutanoate + NADP(+) = (2S)-2-acetolactate + NADPH + H(+). The catalysed reaction is (2R,3R)-2,3-dihydroxy-3-methylpentanoate + NADP(+) = (S)-2-ethyl-2-hydroxy-3-oxobutanoate + NADPH + H(+). The protein operates within amino-acid biosynthesis; L-isoleucine biosynthesis; L-isoleucine from 2-oxobutanoate: step 2/4. It participates in amino-acid biosynthesis; L-valine biosynthesis; L-valine from pyruvate: step 2/4. In terms of biological role, involved in the biosynthesis of branched-chain amino acids (BCAA). Catalyzes an alkyl-migration followed by a ketol-acid reduction of (S)-2-acetolactate (S2AL) to yield (R)-2,3-dihydroxy-isovalerate. In the isomerase reaction, S2AL is rearranged via a Mg-dependent methyl migration to produce 3-hydroxy-3-methyl-2-ketobutyrate (HMKB). In the reductase reaction, this 2-ketoacid undergoes a metal-dependent reduction by NADPH to yield (R)-2,3-dihydroxy-isovalerate. This is Ketol-acid reductoisomerase (NADP(+)) from Klebsiella pneumoniae (strain 342).